A 303-amino-acid chain; its full sequence is Glutathione transport system permease protein GsiD (303 aa).

Helical transmembrane passes span A40 to I60, L105 to L125, L144 to I164, A165 to G185, I222 to F242, and V266 to F286. Residues A101–G290 form the ABC transmembrane type-1 domain.

This sequence belongs to the binding-protein-dependent transport system permease family. As to quaternary structure, the complex is composed of two ATP-binding proteins (GsiA), two transmembrane proteins (GsiC and GsiD) and a solute-binding protein (GsiB).

It is found in the cell inner membrane. Part of the ABC transporter complex GsiABCD involved in glutathione import. Probably responsible for the translocation of the substrate across the membrane. In Escherichia coli O1:K1 / APEC, this protein is Glutathione transport system permease protein GsiD.